The chain runs to 150 residues: Large ribosomal subunit protein bL9 (150 aa).

It belongs to the bacterial ribosomal protein bL9 family.

Binds to the 23S rRNA. The chain is Large ribosomal subunit protein bL9 from Corynebacterium diphtheriae (strain ATCC 700971 / NCTC 13129 / Biotype gravis).